The primary structure comprises 351 residues: uncharacterized protein (351 aa).

Mn(2+)-binding residues include D215, D226, H290, E319, and E333.

The protein belongs to the peptidase M24B family. Requires Mn(2+) as cofactor.

This is an uncharacterized protein from Staphylococcus aureus (strain bovine RF122 / ET3-1).